Reading from the N-terminus, the 331-residue chain is UDP-GalNAc:beta-1,3-N-acetylgalactosaminyltransferase 1 (331 aa).

Residues Met1–Trp20 are Cytoplasmic-facing. Residues Ser21–Val43 form a helical; Signal-anchor for type II membrane protein membrane-spanning segment. At Ile44–Tyr331 the chain is on the lumenal side. Asn72, Asn154, Asn198, Asn212, and Asn326 each carry an N-linked (GlcNAc...) asparagine glycan.

It belongs to the glycosyltransferase 31 family. Mg(2+) serves as cofactor. As to expression, detected in brain, ovary, kidney, uterus and stomach. In ovary, specifically expressed in follicular granulosa cells and shows particularly strong expression at later stages of follicle development.

The protein resides in the golgi apparatus membrane. The enzyme catalyses a globoside Gb3Cer (d18:1(4E)) + UDP-N-acetyl-alpha-D-galactosamine = a globoside Gb4Cer (d18:1(4E)) + UDP + H(+). The protein operates within protein modification; protein glycosylation. Its function is as follows. Transfers N-acetylgalactosamine onto globotriaosylceramide. Plays a critical role in preimplantation stage embryonic development. The polypeptide is UDP-GalNAc:beta-1,3-N-acetylgalactosaminyltransferase 1 (Mus musculus (Mouse)).